A 252-amino-acid chain; its full sequence is Pimeloyl-[acyl-carrier protein] methyl ester esterase (252 aa).

The 225-residue stretch at 15–239 folds into the AB hydrolase-1 domain; that stretch reads LVMLHGWAMH…FPHCGHAPFL (225 aa). Residues Trp-21, 81–82, and 143–147 contribute to the substrate site; these read SL and FLTLQ. Ser-81 acts as the Nucleophile in catalysis. Residues Asp-207 and His-235 contribute to the active site. Residue His-235 coordinates substrate.

This sequence belongs to the AB hydrolase superfamily. Carboxylesterase BioH family. As to quaternary structure, monomer.

The protein resides in the cytoplasm. The catalysed reaction is 6-carboxyhexanoyl-[ACP] methyl ester + H2O = 6-carboxyhexanoyl-[ACP] + methanol + H(+). The protein operates within cofactor biosynthesis; biotin biosynthesis. Its function is as follows. The physiological role of BioH is to remove the methyl group introduced by BioC when the pimeloyl moiety is complete. It allows to synthesize pimeloyl-ACP via the fatty acid synthetic pathway through the hydrolysis of the ester bonds of pimeloyl-ACP esters. The polypeptide is Pimeloyl-[acyl-carrier protein] methyl ester esterase (Nitrosomonas europaea (strain ATCC 19718 / CIP 103999 / KCTC 2705 / NBRC 14298)).